Consider the following 419-residue polypeptide: UDP-N-acetylglucosamine 1-carboxyvinyltransferase 2 (419 aa).

22 to 23 (KN) is a binding site for phosphoenolpyruvate. Arg92 serves as a coordination point for UDP-N-acetyl-alpha-D-glucosamine. Asp116 serves as the catalytic Proton donor. Residues 121–125 (RPIDQ), Asp306, and Leu328 each bind UDP-N-acetyl-alpha-D-glucosamine.

This sequence belongs to the EPSP synthase family. MurA subfamily.

Its subcellular location is the cytoplasm. It catalyses the reaction phosphoenolpyruvate + UDP-N-acetyl-alpha-D-glucosamine = UDP-N-acetyl-3-O-(1-carboxyvinyl)-alpha-D-glucosamine + phosphate. It participates in cell wall biogenesis; peptidoglycan biosynthesis. Functionally, cell wall formation. Adds enolpyruvyl to UDP-N-acetylglucosamine. The protein is UDP-N-acetylglucosamine 1-carboxyvinyltransferase 2 of Latilactobacillus sakei subsp. sakei (strain 23K) (Lactobacillus sakei subsp. sakei).